Here is a 389-residue protein sequence, read N- to C-terminus: Galactose-1-phosphate uridylyltransferase (389 aa).

Belongs to the galactose-1-phosphate uridylyltransferase type 2 family.

It localises to the cytoplasm. It carries out the reaction alpha-D-galactose 1-phosphate + UDP-alpha-D-glucose = alpha-D-glucose 1-phosphate + UDP-alpha-D-galactose. Its pathway is carbohydrate metabolism; galactose metabolism. The chain is Galactose-1-phosphate uridylyltransferase (galT) from Butyrivibrio fibrisolvens.